A 107-amino-acid chain; its full sequence is Cytochrome c2 (107 aa).

The residue at position 1 (glutamine 1) is a Pyrrolidone carboxylic acid. Positions 13, 16, 17, and 79 each coordinate heme c.

Belongs to the cytochrome c family. Post-translationally, binds 1 heme c group covalently per subunit.

The protein resides in the periplasm. In terms of biological role, cytochrome c2 is found mainly in purple, non-sulfur, photosynthetic bacteria where it functions as the electron donor to the oxidized bacteriochlorophyll in the photophosphorylation pathway. However, it may also have a role in the respiratory chain and is found in some non-photosynthetic bacteria. This chain is Cytochrome c2, found in Rhodoplanes tepidamans (Rhodoplanes cryptolactis).